The chain runs to 508 residues: Lysine--tRNA ligase (508 aa).

Positions 418 and 425 each coordinate Mg(2+).

It belongs to the class-II aminoacyl-tRNA synthetase family. In terms of assembly, homodimer. Mg(2+) is required as a cofactor.

It localises to the cytoplasm. It catalyses the reaction tRNA(Lys) + L-lysine + ATP = L-lysyl-tRNA(Lys) + AMP + diphosphate. The protein is Lysine--tRNA ligase of Burkholderia thailandensis (strain ATCC 700388 / DSM 13276 / CCUG 48851 / CIP 106301 / E264).